Reading from the N-terminus, the 776-residue chain is Serine/threonine-protein kinase SIK1 (776 aa).

The Protein kinase domain maps to Y27–M278. Residues L33–V41 and K56 each bind ATP. D149 functions as the Proton acceptor in the catalytic mechanism. Phosphothreonine; by LKB1 and GSK3-beta is present on T182. S186 is modified (phosphoserine; by autocatalysis). The UBA domain occupies D303 to E343. Phosphothreonine; by CaMK1 is present on T322. Disordered regions lie at residues S350–D371 and E449–R472. Residue S577 is modified to Phosphoserine; by PKA. The segment at K586–R612 is RK-rich region. The tract at residues G621–A643 is disordered. Polar residues predominate over residues T628–A643.

This sequence belongs to the protein kinase superfamily. CAMK Ser/Thr protein kinase family. AMPK subfamily. Interacts (when phosphorylated on Thr-182 and Ser-186) with YWHAZ. Interacts with ATP1A1. It depends on Mg(2+) as a cofactor. Phosphorylated at Thr-182 by STK11/LKB1 in complex with STE20-related adapter-alpha (STRADA) pseudo kinase and CAB39, leading to its activation. Phosphorylation at Thr-182 promotes autophosphorylation at Ser-186, which is required for sustained activity. Autophosphorylation at Ser-186 is maintained by sequential phosphorylation at Thr-182 by GSK3-beta. GSK3-beta cannot initiate phosphorylation at Thr-182, it can only maintain it. Phosphorylation at Ser-577 by PKA promotes translocation to the cytoplasm. Phosphorylation at Thr-322 by CaMK1 following intracellular sodium concentration leads to activation.

It is found in the cytoplasm. Its subcellular location is the nucleus. The catalysed reaction is L-seryl-[protein] + ATP = O-phospho-L-seryl-[protein] + ADP + H(+). It catalyses the reaction L-threonyl-[protein] + ATP = O-phospho-L-threonyl-[protein] + ADP + H(+). Its activity is regulated as follows. Activated by phosphorylation on Thr-182. Also activated by phosphorylation on Thr-322 in response to increases in intracellular sodium in parallel with elevations in intracellular calcium through the reversible sodium/calcium exchanger. Serine/threonine-protein kinase involved in various processes such as cell cycle regulation, gluconeogenesis and lipogenesis regulation, muscle growth and differentiation and tumor suppression. Phosphorylates HDAC4, HDAC5, PPME1, SREBF1, CRTC1/TORC1 and CRTC2/TORC2. Acts as a tumor suppressor and plays a key role in p53/TP53-dependent anoikis, a type of apoptosis triggered by cell detachment: required for phosphorylation of p53/TP53 in response to loss of adhesion and is able to suppress metastasis. Part of a sodium-sensing signaling network, probably by mediating phosphorylation of PPME1: following increases in intracellular sodium, SIK1 is activated by CaMK1 and phosphorylates PPME1 subunit of protein phosphatase 2A (PP2A), leading to dephosphorylation of sodium/potassium-transporting ATPase ATP1A1 and subsequent increase activity of ATP1A1. Acts as a regulator of muscle cells by phosphorylating and inhibiting class II histone deacetylases HDAC4 and HDAC5, leading to promote expression of MEF2 target genes in myocytes. Also required during cardiomyogenesis by regulating the exit of cardiomyoblasts from the cell cycle via down-regulation of CDKN1C/p57Kip2. Acts as a regulator of hepatic gluconeogenesis by phosphorylating and repressing the CREB-specific coactivators CRTC1/TORC1 and CRTC2/TORC2, leading to inhibit CREB activity. Also regulates hepatic lipogenesis by phosphorylating and inhibiting SREBF1. In concert with CRTC1/TORC1, regulates the light-induced entrainment of the circadian clock by attenuating PER1 induction; represses CREB-mediated transcription of PER1 by phosphorylating and deactivating CRTC1/TORC1. The sequence is that of Serine/threonine-protein kinase SIK1 (Sik1) from Rattus norvegicus (Rat).